The primary structure comprises 607 residues: Elongation factor 4 (607 aa).

One can recognise a tr-type G domain in the interval 11-193 (KNIRNFSIIA…KIVEVVPPPE (183 aa)). GTP-binding positions include 23–28 (DHGKST) and 140–143 (NKID).

It belongs to the TRAFAC class translation factor GTPase superfamily. Classic translation factor GTPase family. LepA subfamily.

The protein resides in the cell membrane. The enzyme catalyses GTP + H2O = GDP + phosphate + H(+). Its function is as follows. Required for accurate and efficient protein synthesis under certain stress conditions. May act as a fidelity factor of the translation reaction, by catalyzing a one-codon backward translocation of tRNAs on improperly translocated ribosomes. Back-translocation proceeds from a post-translocation (POST) complex to a pre-translocation (PRE) complex, thus giving elongation factor G a second chance to translocate the tRNAs correctly. Binds to ribosomes in a GTP-dependent manner. The sequence is that of Elongation factor 4 from Staphylococcus saprophyticus subsp. saprophyticus (strain ATCC 15305 / DSM 20229 / NCIMB 8711 / NCTC 7292 / S-41).